Reading from the N-terminus, the 412-residue chain is NADH-ubiquinone oxidoreductase 49 kDa subunit (412 aa).

This sequence belongs to the complex I 49 kDa subunit family.

The protein resides in the hydrogenosome. The enzyme catalyses a ubiquinone + NADH + 5 H(+)(in) = a ubiquinol + NAD(+) + 4 H(+)(out). Transfer of electrons from NADH to the respiratory chain. The immediate electron acceptor for the enzyme is believed to be ubiquinone. Component of the iron-sulfur (IP) fragment of the enzyme. The polypeptide is NADH-ubiquinone oxidoreductase 49 kDa subunit (nad7) (Nyctotherus ovalis).